The sequence spans 241 residues: Large ribosomal subunit protein eL32 (241 aa).

Over residues 1 to 16 (MADNEEDVEAEEEYTE) the composition is skewed to acidic residues. 2 disordered regions span residues 1 to 47 (MADN…GADQ) and 68 to 182 (VGGL…HPSG). Basic and acidic residues predominate over residues 29 to 44 (ESLREAGFESVEDVRG). The segment covering 73–96 (VESETEAEVEEEGGEEAPDEDVET) has biased composition (acidic residues). Over residues 103–116 (LTEKTPDLSDEDAR) the composition is skewed to basic and acidic residues. The segment covering 133–159 (DHHKKKRVSTSWRKPRGQLSKQRRGIK) has biased composition (basic residues).

Belongs to the eukaryotic ribosomal protein eL32 family. Part of the 50S ribosomal subunit. Interacts weakly with protein L15.

In terms of biological role, binds to the 23S rRNA. This Haloarcula marismortui (strain ATCC 43049 / DSM 3752 / JCM 8966 / VKM B-1809) (Halobacterium marismortui) protein is Large ribosomal subunit protein eL32 (rpl32e).